The chain runs to 312 residues: Protoheme IX farnesyltransferase (312 aa).

9 helical membrane passes run 31–51 (LLMK…GLFI), 58–78 (PLLS…AGAI), 107–127 (TALT…AICV), 130–150 (ISSI…TMWL), 157–177 (NIVI…SAVT), 184–204 (CLML…TLSL), 229–249 (YSIL…YFTD), 250–270 (IAGL…LCYA), and 286–306 (FKYS…EHCI).

Belongs to the UbiA prenyltransferase family. Protoheme IX farnesyltransferase subfamily.

Its subcellular location is the cell inner membrane. It catalyses the reaction heme b + (2E,6E)-farnesyl diphosphate + H2O = Fe(II)-heme o + diphosphate. It functions in the pathway porphyrin-containing compound metabolism; heme O biosynthesis; heme O from protoheme: step 1/1. Converts heme B (protoheme IX) to heme O by substitution of the vinyl group on carbon 2 of heme B porphyrin ring with a hydroxyethyl farnesyl side group. This chain is Protoheme IX farnesyltransferase, found in Orientia tsutsugamushi (strain Ikeda) (Rickettsia tsutsugamushi).